The primary structure comprises 262 residues: uncharacterized protein (262 aa).

One can recognise an S4 RNA-binding domain in the interval 6 to 70 (LRINQFLAHY…LKNKKFSVLV (65 aa)). Aspartate 108 acts as the Nucleophile in catalysis.

The protein belongs to the pseudouridine synthase RsuA family.

It catalyses the reaction a uridine in RNA = a pseudouridine in RNA. This is an uncharacterized protein from Helicobacter pylori (strain J99 / ATCC 700824) (Campylobacter pylori J99).